Reading from the N-terminus, the 109-residue chain is MFGKGGLGGLMKQAQQMQERMQKMQEEIAQLEVTGESGAGLVKVTINGAHNCRRIEIDPSLMEDDKEMVEDLVAAAFNDAVRRAEEMQKEKMASVTAGMQLPPGMKFPF.

A disordered region spans residues 1–21 (MFGKGGLGGLMKQAQQMQERM). A compositionally biased stretch (low complexity) spans 10–19 (LMKQAQQMQE).

Belongs to the YbaB/EbfC family. In terms of assembly, homodimer.

It localises to the cytoplasm. The protein resides in the nucleoid. In terms of biological role, binds to DNA and alters its conformation. May be involved in regulation of gene expression, nucleoid organization and DNA protection. This chain is Nucleoid-associated protein APL_0075, found in Actinobacillus pleuropneumoniae serotype 5b (strain L20).